The primary structure comprises 227 residues: PKHD-type hydroxylase Mfla_2317 (227 aa).

Residues 78-178 (KVFPPLFNRY…RVSSFFWMQS (101 aa)) enclose the Fe2OG dioxygenase domain. Fe cation contacts are provided by H96, D98, and H159. R169 provides a ligand contact to 2-oxoglutarate.

Fe(2+) is required as a cofactor. L-ascorbate serves as cofactor.

This chain is PKHD-type hydroxylase Mfla_2317, found in Methylobacillus flagellatus (strain ATCC 51484 / DSM 6875 / VKM B-1610 / KT).